The chain runs to 924 residues: DNA repair and recombination protein RDH54 (924 aa).

Basic and acidic residues predominate over residues 1 to 10; it reads MQIPKYENKP. 2 disordered regions span residues 1-21 and 155-183; these read MQIP…GSNK and EALS…NDGG. A compositionally biased stretch (low complexity) spans 168 to 178; that stretch reads TTSTTETVPST. Positions 299–487 constitute a Helicase ATP-binding domain; that stretch reads LENDSDISGC…FTIIDFINPG (189 aa). ATP is bound at residue 346 to 353; the sequence is IPLTGLCK. The DEGH box signature appears at 472-475; sequence NDLN. Residue K615 forms a Glycyl lysine isopeptide (Lys-Gly) (interchain with G-Cter in ubiquitin) linkage. A Helicase C-terminal domain is found at 631-790; it reads KLRVLMTLLE…DSEMRNKESS (160 aa).

This sequence belongs to the SNF2/RAD54 helicase family. In terms of assembly, interacts with RAD51 and DMC1.

It localises to the nucleus. The enzyme catalyses ATP + H2O = ADP + phosphate + H(+). Involved in the recombinational repair of double-strand breaks (DSB) in DNA during mitosis and meiosis. Has DNA dependent ATPase activity. Promotes D-loop (displacement loop) formation with RAD51 recombinase. Modifies the topology of double-stranded DNA during the D-loop reaction to facilitate the invasion of the homologous duplex molecule by the initiating single-stranded DNA substrate. Required for adaptation from G2/M checkpoint arrest induced by a double strand break, by participating in monitoring the extent of single-stranded DNA produced by resection of DNA ends. This role is distinct from its roles in recombination. Promotes colocalization of RAD51 and DMC1 during meiotic recombination. Involved in crossover interference. The polypeptide is DNA repair and recombination protein RDH54 (RDH54) (Saccharomyces cerevisiae (strain YJM789) (Baker's yeast)).